An 83-amino-acid polypeptide reads, in one-letter code: MSGSTGGRSFADIITSIRYWVIHSITIPSLFIAGWLFVSTGLAYDVFGSPRPNEYFTESRQGIPLITGRFDSLEQLDEFSRSF.

The chain crosses the membrane as a helical span at residues 21–35 (VIHSITIPSLFIAGW). His-23 contributes to the heme binding site.

This sequence belongs to the PsbE/PsbF family. Heterodimer of an alpha subunit and a beta subunit. PSII is composed of 1 copy each of membrane proteins PsbA, PsbB, PsbC, PsbD, PsbE, PsbF, PsbH, PsbI, PsbJ, PsbK, PsbL, PsbM, PsbT, PsbX, PsbY, PsbZ, Psb30/Ycf12, at least 3 peripheral proteins of the oxygen-evolving complex and a large number of cofactors. It forms dimeric complexes. The cofactor is heme b.

It is found in the plastid. Its subcellular location is the chloroplast thylakoid membrane. Functionally, this b-type cytochrome is tightly associated with the reaction center of photosystem II (PSII). PSII is a light-driven water:plastoquinone oxidoreductase that uses light energy to abstract electrons from H(2)O, generating O(2) and a proton gradient subsequently used for ATP formation. It consists of a core antenna complex that captures photons, and an electron transfer chain that converts photonic excitation into a charge separation. This Oenothera berteroana (Bertero's evening primrose) protein is Cytochrome b559 subunit alpha.